A 185-amino-acid chain; its full sequence is Ribosome-recycling factor (185 aa).

This sequence belongs to the RRF family.

It localises to the cytoplasm. In terms of biological role, responsible for the release of ribosomes from messenger RNA at the termination of protein biosynthesis. May increase the efficiency of translation by recycling ribosomes from one round of translation to another. The polypeptide is Ribosome-recycling factor (Ehrlichia chaffeensis (strain ATCC CRL-10679 / Arkansas)).